A 75-amino-acid polypeptide reads, in one-letter code: Acyl carrier protein (75 aa).

The region spanning 1–75 is the Carrier domain; it reads MSVFDKVKSI…DAVNYIKENQ (75 aa). Residue serine 35 is modified to O-(pantetheine 4'-phosphoryl)serine.

Belongs to the acyl carrier protein (ACP) family. 4'-phosphopantetheine is transferred from CoA to a specific serine of apo-ACP by AcpS. This modification is essential for activity because fatty acids are bound in thioester linkage to the sulfhydryl of the prosthetic group.

It localises to the cytoplasm. Its pathway is lipid metabolism; fatty acid biosynthesis. Carrier of the growing fatty acid chain in fatty acid biosynthesis. The chain is Acyl carrier protein from Desulfitobacterium hafniense (strain Y51).